The sequence spans 61 residues: Large ribosomal subunit protein uL29 (61 aa).

This sequence belongs to the universal ribosomal protein uL29 family.

The sequence is that of Large ribosomal subunit protein uL29 from Stenotrophomonas maltophilia (strain R551-3).